The following is a 223-amino-acid chain: Uracil-DNA glycosylase (223 aa).

The Proton acceptor role is filled by aspartate 61.

This sequence belongs to the uracil-DNA glycosylase (UDG) superfamily. UNG family.

The protein localises to the cytoplasm. The enzyme catalyses Hydrolyzes single-stranded DNA or mismatched double-stranded DNA and polynucleotides, releasing free uracil.. Excises uracil residues from the DNA which can arise as a result of misincorporation of dUMP residues by DNA polymerase or due to deamination of cytosine. In Haemophilus ducreyi (strain 35000HP / ATCC 700724), this protein is Uracil-DNA glycosylase.